The following is a 268-amino-acid chain: Phosphatidylglycerol--prolipoprotein diacylglyceryl transferase (268 aa).

7 helical membrane-spanning segments follow: residues 21-41, 54-74, 93-113, 122-142, 173-193, 203-223, and 236-256; these read WYGIIIVSAIALSIWLGGRFA, FAIILVPAGILGARLYEVFVL, GLAIHGAVLGGAIAAAIYLPM, ADVVGLVLPLAQAIGRWGNFF, VMHPTFLYESVWNLLTFGILL, GVVFSLYLVLYNAGRFLIESI, and VAQLVAAVLAILGLVLLAWFL. An a 1,2-diacyl-sn-glycero-3-phospho-(1'-sn-glycerol)-binding site is contributed by arginine 137.

This sequence belongs to the Lgt family.

The protein localises to the cell membrane. The catalysed reaction is L-cysteinyl-[prolipoprotein] + a 1,2-diacyl-sn-glycero-3-phospho-(1'-sn-glycerol) = an S-1,2-diacyl-sn-glyceryl-L-cysteinyl-[prolipoprotein] + sn-glycerol 1-phosphate + H(+). It functions in the pathway protein modification; lipoprotein biosynthesis (diacylglyceryl transfer). Its function is as follows. Catalyzes the transfer of the diacylglyceryl group from phosphatidylglycerol to the sulfhydryl group of the N-terminal cysteine of a prolipoprotein, the first step in the formation of mature lipoproteins. This chain is Phosphatidylglycerol--prolipoprotein diacylglyceryl transferase, found in Symbiobacterium thermophilum (strain DSM 24528 / JCM 14929 / IAM 14863 / T).